The sequence spans 450 residues: Phosphoglucosamine mutase 2 (450 aa).

Ser101 (phosphoserine intermediate) is an active-site residue. Mg(2+) contacts are provided by Ser101, Asp245, Asp247, and Asp249. Ser101 bears the Phosphoserine mark.

The protein belongs to the phosphohexose mutase family. The cofactor is Mg(2+). Activated by phosphorylation.

The enzyme catalyses alpha-D-glucosamine 1-phosphate = D-glucosamine 6-phosphate. Functionally, catalyzes the conversion of glucosamine-6-phosphate to glucosamine-1-phosphate. This chain is Phosphoglucosamine mutase 2, found in Shewanella sp. (strain MR-7).